The following is a 345-amino-acid chain: Eukaryotic translation initiation factor 3 subunit F (345 aa).

Residues 30–166 form the MPN domain; that stretch reads VVIHPQALFS…TRAYISAPVG (137 aa). Residues 308 to 345 form a disordered region; the sequence is GGESGNAESGQRGGQRGGKGGRGGQQRTQDRSGEEARA. Gly residues predominate over residues 318–331; the sequence is QRGGQRGGKGGRGG. The span at 335–345 shows a compositional bias: basic and acidic residues; sequence TQDRSGEEARA.

This sequence belongs to the eIF-3 subunit F family. As to quaternary structure, component of the eukaryotic translation initiation factor 3 (eIF-3) complex.

The protein resides in the cytoplasm. In terms of biological role, component of the eukaryotic translation initiation factor 3 (eIF-3) complex, which is involved in protein synthesis of a specialized repertoire of mRNAs and, together with other initiation factors, stimulates binding of mRNA and methionyl-tRNAi to the 40S ribosome. The eIF-3 complex specifically targets and initiates translation of a subset of mRNAs involved in cell proliferation. The chain is Eukaryotic translation initiation factor 3 subunit F from Aspergillus oryzae (strain ATCC 42149 / RIB 40) (Yellow koji mold).